Consider the following 602-residue polypeptide: Pyranose dehydrogenase 1 (602 aa).

Residues 1–25 form the signal peptide; that stretch reads MLPRVTKLNSRLLSLALLGIQIARG. N-linked (GlcNAc...) asparagine glycosylation occurs at Asn100. Residue His128 is modified to Tele-8alpha-FAD histidine. N-linked (GlcNAc...) asparagine glycosylation is found at Asn200, Asn277, and Asn344. Catalysis depends on His537, which acts as the Proton acceptor. His581 is an active-site residue.

It belongs to the GMC oxidoreductase family. Monomer. Requires FAD as cofactor. Post-translationally, N-glycosylated.

It localises to the secreted. It carries out the reaction pyranose + acceptor = pyranos-2-ulose + reduced acceptor.. It catalyses the reaction pyranose + acceptor = pyranos-3-ulose + reduced acceptor.. The catalysed reaction is pyranose + acceptor = pyranos-2,3-diulose + reduced acceptor.. The enzyme catalyses a pyranoside + acceptor = a pyranosid-3-ulose + reduced acceptor.. It carries out the reaction a pyranoside + acceptor = a pyranosid-3,4-diulose + reduced acceptor.. Its function is as follows. Catalyzes the single-oxidation or sequential double oxidation reaction of carbohydrates primarily at carbon-2 and/or carbon-3 with the concomitant reduction of the flavin. The enzyme exhibits a broad sugar substrate specificity, oxidizing different aldopyranoses to the corresponding C-1, C-2, C-3 or C-1,2, C-2,3 and C-3,4 (di)dehydro sugars with substrate-specific regioselectivity. Accepts only a narrow range of electron acceptors such as substituted benzoquinones and complexed metal ions and reacts extremely slowly with O(2) as acceptor. May play a role in the natural recycling of plant matter by oxidizing all major monosaccharides in lignocellulose and by reducing quinone compounds or reactive radical species generated during lignin depolymerization. The polypeptide is Pyranose dehydrogenase 1 (Leucoagaricus meleagris (Western flat-topped agaric)).